A 174-amino-acid polypeptide reads, in one-letter code: Co-chaperone protein HscB homolog (174 aa).

A J domain is found at 2-74 (NYFELFNLPV…IRRAEHMLAL (73 aa)).

Belongs to the HscB family. In terms of assembly, interacts with HscA and stimulates its ATPase activity.

In terms of biological role, co-chaperone involved in the maturation of iron-sulfur cluster-containing proteins. Seems to help targeting proteins to be folded toward HscA. This chain is Co-chaperone protein HscB homolog, found in Shewanella amazonensis (strain ATCC BAA-1098 / SB2B).